We begin with the raw amino-acid sequence, 708 residues long: Pre-mRNA-splicing factor SPP382 (708 aa).

The G-patch domain occupies 61 to 108 (TYGIGAKLLSSMGYVAGKGLGKDGSGITTPIETQSRPMHNAGLGMFSN).

In terms of assembly, component of the NTR complex (NTC-related complex), composed of NTR1, NTR2 and PRP43. Interacts with CLF1 and NTR2. Interacts with PRP43 and PRP45.

The protein localises to the cytoplasm. It localises to the nucleus. Functionally, involved in pre-mRNA splicing and spliceosome disassembly. Promotes release of excised lariat intron from the spliceosome by acting as a receptor for PRP43. This targeting of PRP43 leads to disassembly of the spliceosome with the separation of the U2, U5, U6 snRNPs and the NTC complex. The sequence is that of Pre-mRNA-splicing factor SPP382 (SPP382) from Saccharomyces cerevisiae (strain ATCC 204508 / S288c) (Baker's yeast).